The chain runs to 362 residues: Heme A synthase (362 aa).

Helical transmembrane passes span 10–30 (LAAI…MVLV), 102–122 (VIGM…AVSG), 128–148 (LWLI…MVAS), 159–179 (VRLA…VWTL), and 198–218 (AWGL…VAGL). Heme is bound at residue His262. 3 helical membrane-spanning segments follow: residues 266–286 (AYTL…AGAG), 297–317 (LAAI…VVPI), and 318–338 (SLAL…VLQA). His323 contacts heme.

This sequence belongs to the COX15/CtaA family. Type 2 subfamily. As to quaternary structure, interacts with CtaB. Heme b serves as cofactor.

It is found in the cell membrane. The catalysed reaction is Fe(II)-heme o + 2 A + H2O = Fe(II)-heme a + 2 AH2. It functions in the pathway porphyrin-containing compound metabolism; heme A biosynthesis; heme A from heme O: step 1/1. Its function is as follows. Catalyzes the conversion of heme O to heme A by two successive hydroxylations of the methyl group at C8. The first hydroxylation forms heme I, the second hydroxylation results in an unstable dihydroxymethyl group, which spontaneously dehydrates, resulting in the formyl group of heme A. This chain is Heme A synthase, found in Bradyrhizobium sp. (strain BTAi1 / ATCC BAA-1182).